Reading from the N-terminus, the 227-residue chain is Type II restriction enzyme HhaII (227 aa).

Homodimer.

The enzyme catalyses Endonucleolytic cleavage of DNA to give specific double-stranded fragments with terminal 5'-phosphates.. Its function is as follows. A P subtype restriction enzyme that recognizes the double-stranded sequence 5'-GANTC-3' and cleaves after G-1. This Haemophilus parahaemolyticus protein is Type II restriction enzyme HhaII (hhaIIR).